Consider the following 389-residue polypeptide: MSAVIVNTVEQCGYFNRGQCQSCRHIQVPMAQQLMAKSLELQQLLKPFVAPSAAIFYPPVTGEATAFRNKAKMVVLGAAHAPVLGIVSPSGEAVSLCDCLLYPSDMQKLLHRLTQFVQQAGIPPYRVDKAKGELKFILLTRSQVRGEYLLRFVLRSHNSIERIERALPTLLAEYPQINVVSVNIQPIHMAILEGDEEIFLTENTRLEERFNDVPLFIRPKSFFQTNPQVAAQLYQTAREWVAEFAPKSLWDLFCGVGGFGLHCATKDIALTGIEIEAEAISCAQISANLMGLEKVQFMALDSTDFAQGKNAADKPDLIIVNPPRRGIGEALCQSLSEFAPRAILYSSCNPKTLAKDLEHIQGYHLTKVQLFDLFPHTDHFEVLAMLVKD.

Residues Cys12, Cys20, Cys23, and Cys99 each contribute to the [4Fe-4S] cluster site. S-adenosyl-L-methionine contacts are provided by Gln224, Phe253, Glu274, and Asn321. The Nucleophile role is filled by Cys348.

Belongs to the class I-like SAM-binding methyltransferase superfamily. RNA M5U methyltransferase family. RlmC subfamily.

It carries out the reaction uridine(747) in 23S rRNA + S-adenosyl-L-methionine = 5-methyluridine(747) in 23S rRNA + S-adenosyl-L-homocysteine + H(+). In terms of biological role, catalyzes the formation of 5-methyl-uridine at position 747 (m5U747) in 23S rRNA. In Shewanella sp. (strain W3-18-1), this protein is 23S rRNA (uracil(747)-C(5))-methyltransferase RlmC.